A 20-amino-acid chain; its full sequence is Flagellar filament 33 kDa core protein (20 aa).

This sequence belongs to the bacterial flagellin family. As to quaternary structure, the flagellum consists of an outer layer composed of repeating units of FlaA around a core that contains one or all of five antigenically related polypeptides.

The protein resides in the periplasmic flagellum. It is found in the periplasm. Functionally, component of the core of the flagella. This chain is Flagellar filament 33 kDa core protein, found in Spirochaeta aurantia.